A 106-amino-acid chain; its full sequence is Nucleoid-associated protein XOO1065 (106 aa).

The segment covering 80–89 (KIDAESKDRM) has biased composition (basic and acidic residues). The disordered stretch occupies residues 80 to 106 (KIDAESKDRMGSATAGMQLPPGMKLPF).

It belongs to the YbaB/EbfC family. As to quaternary structure, homodimer.

It is found in the cytoplasm. Its subcellular location is the nucleoid. In terms of biological role, binds to DNA and alters its conformation. May be involved in regulation of gene expression, nucleoid organization and DNA protection. This Xanthomonas oryzae pv. oryzae (strain KACC10331 / KXO85) protein is Nucleoid-associated protein XOO1065.